Consider the following 581-residue polypeptide: Phosphoglucomutase, cytoplasmic (581 aa).

Positions 1 to 11 (MVFSVAKKDTT) are enriched in basic and acidic residues. Residues 1 to 20 (MVFSVAKKDTTPYEGQKPGT) form a disordered region. Residues arginine 24 and serine 123 each contribute to the alpha-D-glucose 1,6-bisphosphate site. The active-site Phosphoserine intermediate is serine 123. Residues serine 123, aspartate 298, aspartate 300, and aspartate 302 each coordinate Mg(2+). Residue serine 123 is modified to Phosphoserine. Alpha-D-glucose 1,6-bisphosphate is bound by residues aspartate 302, arginine 303, threonine 366, glutamate 385, serine 387, and lysine 398.

Belongs to the phosphohexose mutase family. As to quaternary structure, monomer. Mg(2+) is required as a cofactor.

It localises to the cytoplasm. It carries out the reaction alpha-D-glucose 1-phosphate = alpha-D-glucose 6-phosphate. The catalysed reaction is O-phospho-L-seryl-[protein] + alpha-D-glucose 1-phosphate = alpha-D-glucose 1,6-bisphosphate + L-seryl-[protein]. The enzyme catalyses alpha-D-glucose 1,6-bisphosphate + L-seryl-[protein] = O-phospho-L-seryl-[protein] + alpha-D-glucose 6-phosphate. Its function is as follows. Catalyzes the reversible isomerization of alpha-D-glucose 1-phosphate to alpha-D-glucose 6-phosphate. The mechanism proceeds via the intermediate compound alpha-D-glucose 1,6-bisphosphate. This enzyme participates in both the breakdown and synthesis of glucose. This Bromus inermis (Smooth brome grass) protein is Phosphoglucomutase, cytoplasmic (PGM1).